The primary structure comprises 1192 residues: Coiled-coil domain-containing protein 40 (1192 aa).

5 disordered regions span residues 1–78, 126–153, 173–196, 211–246, and 261–289; these read MMDA…PGMD, KAKH…LEVS, SSPE…NVSA, EPIE…YQRD, and GSLT…STPR. The segment covering 27-45 has biased composition (acidic residues); that stretch reads PETEVEFIGETAPDTDVEF. Over residues 215 to 228 the composition is skewed to pro residues; sequence PTEPPEPAEPPKPA. Acidic residues predominate over residues 267 to 279; sequence DTDDLPLETDEPP. Position 306 is a phosphoserine (serine 306). 7 coiled-coil regions span residues 308-369, 425-451, 581-649, 733-768, 830-871, 919-972, and 1044-1118; these read EALL…ATKQ, KTCQ…ALHL, DSEI…MLNK, NTNC…EIAR, LQQE…KIAH, LRTL…EMRS, and QQRE…IVTL.

The protein belongs to the CCDC40 family. In terms of tissue distribution, specifically expressed in the embryonic node and midline.

The protein localises to the cytoplasm. The protein resides in the cell projection. Its subcellular location is the cilium. In terms of biological role, required for assembly of dynein regulatory complex (DRC) and inner dynein arm (IDA) complexes, which are responsible for ciliary beat regulation, thereby playing a central role in motility in cilia and flagella. Probably acts together with CCDC39 to form a molecular ruler that determines the 96 nanometer (nm) repeat length and arrangements of components in cilia and flagella. Not required for outer dynein arm complexes assembly. Required for axonemal recruitment of CCDC39. The polypeptide is Coiled-coil domain-containing protein 40 (Mus musculus (Mouse)).